A 323-amino-acid polypeptide reads, in one-letter code: Putative ABC transporter substrate-binding lipoprotein YhfQ (323 aa).

Positions 1 to 19 (MKKTLIILTVLLLSVLTAA) are cleaved as a signal peptide. Cys-20 carries N-palmitoyl cysteine lipidation. Cys-20 carries the S-diacylglycerol cysteine lipid modification. The 272-residue stretch at 51–322 (RVVVLELGFI…ELQKEMPAAK (272 aa)) folds into the Fe/B12 periplasmic-binding domain.

The protein belongs to the bacterial solute-binding protein 8 family. As to quaternary structure, interacts with FloT.

It localises to the cell membrane. The protein localises to the membrane raft. The protein is Putative ABC transporter substrate-binding lipoprotein YhfQ (yhfQ) of Bacillus subtilis (strain 168).